A 204-amino-acid polypeptide reads, in one-letter code: DNA-directed RNA polymerase subunit gamma (204 aa).

Zn(2+) is bound by residues Cys34, Cys36, Cys49, and Cys52.

It belongs to the RNA polymerase beta' chain family. RpoC1 subfamily. In terms of assembly, in cyanobacteria the RNAP catalytic core is composed of 2 alpha, 1 beta, 1 beta', 1 gamma and 1 omega subunit. When a sigma factor is associated with the core the holoenzyme is formed, which can initiate transcription. It depends on Zn(2+) as a cofactor.

It catalyses the reaction RNA(n) + a ribonucleoside 5'-triphosphate = RNA(n+1) + diphosphate. DNA-dependent RNA polymerase catalyzes the transcription of DNA into RNA using the four ribonucleoside triphosphates as substrates. This Prochlorococcus marinus (strain DV1) protein is DNA-directed RNA polymerase subunit gamma (rpoC1).